We begin with the raw amino-acid sequence, 417 residues long: D-amino acid dehydrogenase (417 aa).

3–17 (IVVLGGGVVGVTSAW) contacts FAD.

The protein belongs to the DadA oxidoreductase family. It depends on FAD as a cofactor.

The enzyme catalyses a D-alpha-amino acid + A + H2O = a 2-oxocarboxylate + AH2 + NH4(+). It participates in amino-acid degradation; D-alanine degradation; NH(3) and pyruvate from D-alanine: step 1/1. In terms of biological role, oxidative deamination of D-amino acids. The chain is D-amino acid dehydrogenase from Aeromonas hydrophila subsp. hydrophila (strain ATCC 7966 / DSM 30187 / BCRC 13018 / CCUG 14551 / JCM 1027 / KCTC 2358 / NCIMB 9240 / NCTC 8049).